The chain runs to 286 residues: Beta-lactamase Ohio-1 (286 aa).

The first 21 residues, 1 to 21, serve as a signal peptide directing secretion; it reads MRYFRLCIISLLATLPLRVHA. Ser-66 serves as the catalytic Acyl-ester intermediate. Residues Cys-73 and Cys-119 are joined by a disulfide bond. The Proton acceptor role is filled by Glu-164. Position 230-232 (230-232) interacts with substrate; sequence KTG.

It belongs to the class-A beta-lactamase family.

The enzyme catalyses a beta-lactam + H2O = a substituted beta-amino acid. The sequence is that of Beta-lactamase Ohio-1 from Enterobacter cloacae.